We begin with the raw amino-acid sequence, 116 residues long: MTELAQQKCQPYQSGSSPITAEEITALQAKIPDWNLLEYEGIPRLQKLYKFANFQGAIAFTNAVGEAAEKEGHHPALLTEWGKVTVSWWTHDVGGLHQNDFIMAARTDDIYRQQNA.

The protein belongs to the pterin-4-alpha-carbinolamine dehydratase family.

It carries out the reaction (4aS,6R)-4a-hydroxy-L-erythro-5,6,7,8-tetrahydrobiopterin = (6R)-L-erythro-6,7-dihydrobiopterin + H2O. This chain is Putative pterin-4-alpha-carbinolamine dehydratase, found in Microcystis aeruginosa (strain NIES-843 / IAM M-2473).